The following is a 360-amino-acid chain: Photosystem II protein D1 3 (360 aa).

3 consecutive transmembrane segments (helical) span residues 29–46 (YVGWFGVLMIPTLLTATI), 118–133 (HFLLGISCYMGRQWEL), and 142–156 (WICVAYSAPLSAAFA). Histidine 118 lines the chlorophyll a pocket. Tyrosine 126 contacts pheophytin a. [CaMn4O5] cluster contacts are provided by aspartate 170 and glutamate 189. A helical transmembrane segment spans residues 197–218 (FHMLGVAGVFGGSLFSAMHGSL). Chlorophyll a is bound at residue histidine 198. A quinone is bound by residues histidine 215 and 264–265 (SF). A Fe cation-binding site is contributed by histidine 215. Residue histidine 272 participates in Fe cation binding. A helical membrane pass occupies residues 274-288 (FLGAWPVVGIWFTSM). [CaMn4O5] cluster is bound by residues histidine 332, glutamate 333, aspartate 342, and alanine 344. Residues 345–360 (AGEATPVALTAPSIHG) constitute a propeptide that is removed on maturation.

Belongs to the reaction center PufL/M/PsbA/D family. PSII is composed of 1 copy each of membrane proteins PsbA, PsbB, PsbC, PsbD, PsbE, PsbF, PsbH, PsbI, PsbJ, PsbK, PsbL, PsbM, PsbT, PsbX, PsbY, PsbZ, Psb30/Ycf12, peripheral proteins PsbO, CyanoQ (PsbQ), PsbU, PsbV and a large number of cofactors. It forms dimeric complexes. The cofactor is The D1/D2 heterodimer binds P680, chlorophylls that are the primary electron donor of PSII, and subsequent electron acceptors. It shares a non-heme iron and each subunit binds pheophytin, quinone, additional chlorophylls, carotenoids and lipids. D1 provides most of the ligands for the Mn4-Ca-O5 cluster of the oxygen-evolving complex (OEC). There is also a Cl(-1) ion associated with D1 and D2, which is required for oxygen evolution. The PSII complex binds additional chlorophylls, carotenoids and specific lipids.. In terms of processing, tyr-161 forms a radical intermediate that is referred to as redox-active TyrZ, YZ or Y-Z. Post-translationally, C-terminally processed by CtpA; processing is essential to allow assembly of the oxygen-evolving complex and thus photosynthetic growth.

It is found in the cellular thylakoid membrane. It carries out the reaction 2 a plastoquinone + 4 hnu + 2 H2O = 2 a plastoquinol + O2. In terms of biological role, photosystem II (PSII) is a light-driven water:plastoquinone oxidoreductase that uses light energy to abstract electrons from H(2)O, generating O(2) and a proton gradient subsequently used for ATP formation. It consists of a core antenna complex that captures photons, and an electron transfer chain that converts photonic excitation into a charge separation. The D1/D2 (PsbA/PsbD) reaction center heterodimer binds P680, the primary electron donor of PSII as well as several subsequent electron acceptors. This Synechococcus sp. (strain ATCC 27144 / PCC 6301 / SAUG 1402/1) (Anacystis nidulans) protein is Photosystem II protein D1 3.